Reading from the N-terminus, the 125-residue chain is S-adenosylmethionine decarboxylase proenzyme (125 aa).

The Schiff-base intermediate with substrate; via pyruvic acid role is filled by Ser-61. Ser-61 bears the Pyruvic acid (Ser); by autocatalysis mark. His-66 serves as the catalytic Proton acceptor; for processing activity. Cys-81 (proton donor; for catalytic activity) is an active-site residue.

The protein belongs to the prokaryotic AdoMetDC family. Type 1 subfamily. Heterotetramer of two alpha and two beta chains arranged as a dimer of alpha/beta heterodimers. The cofactor is pyruvate. Is synthesized initially as an inactive proenzyme. Formation of the active enzyme involves a self-maturation process in which the active site pyruvoyl group is generated from an internal serine residue via an autocatalytic post-translational modification. Two non-identical subunits are generated from the proenzyme in this reaction, and the pyruvate is formed at the N-terminus of the alpha chain, which is derived from the carboxyl end of the proenzyme. The post-translation cleavage follows an unusual pathway, termed non-hydrolytic serinolysis, in which the side chain hydroxyl group of the serine supplies its oxygen atom to form the C-terminus of the beta chain, while the remainder of the serine residue undergoes an oxidative deamination to produce ammonia and the pyruvoyl group blocking the N-terminus of the alpha chain.

It carries out the reaction S-adenosyl-L-methionine + H(+) = S-adenosyl 3-(methylsulfanyl)propylamine + CO2. It functions in the pathway amine and polyamine biosynthesis; S-adenosylmethioninamine biosynthesis; S-adenosylmethioninamine from S-adenosyl-L-methionine: step 1/1. Its function is as follows. Catalyzes the decarboxylation of S-adenosylmethionine to S-adenosylmethioninamine (dcAdoMet), the propylamine donor required for the synthesis of the polyamines spermine and spermidine from the diamine putrescine. This Prochlorococcus marinus (strain MIT 9313) protein is S-adenosylmethionine decarboxylase proenzyme.